Reading from the N-terminus, the 205-residue chain is MSIKYVASSTLPTPWGVFDMHGFEDTETGKEHVALTFGVLDAETPTLGRIHSECLTGDALFSLRCDCGFQLQTAMQNIAEAGQGFILYLRQEGRGIGLLNKIRAYELQDQGANTVEANEKLGFAADMRKYDMILPMMEKIGIKQVSLMTNNPRKVKAMQELGIEVVQRIPLQVGKNRYNEAYLKTKSTELGHMMSEHHFSTDGES.

Residue 49-53 coordinates GTP; it reads RIHSE. Zn(2+)-binding residues include C54, C65, and C67. GTP-binding positions include Q70, 92–94, and T114; that span reads EGR. D126 acts as the Proton acceptor in catalysis. The active-site Nucleophile is the R128. GTP is bound by residues T149 and K154.

This sequence belongs to the GTP cyclohydrolase II family. Requires Zn(2+) as cofactor.

The catalysed reaction is GTP + 4 H2O = 2,5-diamino-6-hydroxy-4-(5-phosphoribosylamino)-pyrimidine + formate + 2 phosphate + 3 H(+). It functions in the pathway cofactor biosynthesis; riboflavin biosynthesis; 5-amino-6-(D-ribitylamino)uracil from GTP: step 1/4. Catalyzes the conversion of GTP to 2,5-diamino-6-ribosylamino-4(3H)-pyrimidinone 5'-phosphate (DARP), formate and pyrophosphate. This chain is GTP cyclohydrolase-2, found in Shewanella woodyi (strain ATCC 51908 / MS32).